We begin with the raw amino-acid sequence, 496 residues long: Aspartyl/glutamyl-tRNA(Asn/Gln) amidotransferase subunit B (496 aa).

This sequence belongs to the GatB/GatE family. GatB subfamily. In terms of assembly, heterotrimer of A, B and C subunits.

It carries out the reaction L-glutamyl-tRNA(Gln) + L-glutamine + ATP + H2O = L-glutaminyl-tRNA(Gln) + L-glutamate + ADP + phosphate + H(+). The catalysed reaction is L-aspartyl-tRNA(Asn) + L-glutamine + ATP + H2O = L-asparaginyl-tRNA(Asn) + L-glutamate + ADP + phosphate + 2 H(+). In terms of biological role, allows the formation of correctly charged Asn-tRNA(Asn) or Gln-tRNA(Gln) through the transamidation of misacylated Asp-tRNA(Asn) or Glu-tRNA(Gln) in organisms which lack either or both of asparaginyl-tRNA or glutaminyl-tRNA synthetases. The reaction takes place in the presence of glutamine and ATP through an activated phospho-Asp-tRNA(Asn) or phospho-Glu-tRNA(Gln). This is Aspartyl/glutamyl-tRNA(Asn/Gln) amidotransferase subunit B from Prochlorococcus marinus (strain MIT 9303).